The following is a 178-amino-acid chain: Actin-related protein 2/3 complex subunit 3-A (178 aa).

The protein belongs to the ARPC3 family. Component of the Arp2/3 complex composed of actr2/arp2, actr3/arp3, arpc1 (arpc1a or arpc1b), arpc2, arpc3, arpc4 and arpc5.

Its subcellular location is the cytoplasm. The protein resides in the cytoskeleton. The protein localises to the cell projection. It localises to the nucleus. Component of the Arp2/3 complex, a multiprotein complex that mediates actin polymerization upon stimulation by nucleation-promoting factor (NPF). The Arp2/3 complex mediates the formation of branched actin networks in the cytoplasm, providing the force for cell motility. In addition to its role in the cytoplasmic cytoskeleton, the Arp2/3 complex also promotes actin polymerization in the nucleus, thereby regulating gene transcription and repair of damaged DNA. The Arp2/3 complex promotes homologous recombination (HR) repair in response to DNA damage by promoting nuclear actin polymerization, leading to drive motility of double-strand breaks (DSBs). The polypeptide is Actin-related protein 2/3 complex subunit 3-A (arpc3-a) (Xenopus laevis (African clawed frog)).